A 459-amino-acid chain; its full sequence is Bifunctional protein GlmU (459 aa).

Residues 1-229 (MSNFAIILAA…FDESLGVNDR (229 aa)) are pyrophosphorylase. Residues 8–11 (LAAG), K22, Q72, and 77–78 (GT) contribute to the UDP-N-acetyl-alpha-D-glucosamine site. D102 serves as a coordination point for Mg(2+). The UDP-N-acetyl-alpha-D-glucosamine site is built by G139, E154, N169, and N227. Mg(2+) is bound at residue N227. Residues 230-250 (VALATAESVMRRRINHKHMVN) form a linker region. The interval 251 to 459 (GVSFVNPEAT…TRLPHHPKNQ (209 aa)) is N-acetyltransferase. Residues R332 and K350 each contribute to the UDP-N-acetyl-alpha-D-glucosamine site. H362 serves as the catalytic Proton acceptor. UDP-N-acetyl-alpha-D-glucosamine-binding residues include Y365 and N376. Residues A379, 385–386 (NY), S404, A422, and R439 contribute to the acetyl-CoA site.

In the N-terminal section; belongs to the N-acetylglucosamine-1-phosphate uridyltransferase family. It in the C-terminal section; belongs to the transferase hexapeptide repeat family. As to quaternary structure, homotrimer. Mg(2+) serves as cofactor.

It localises to the cytoplasm. It catalyses the reaction alpha-D-glucosamine 1-phosphate + acetyl-CoA = N-acetyl-alpha-D-glucosamine 1-phosphate + CoA + H(+). It carries out the reaction N-acetyl-alpha-D-glucosamine 1-phosphate + UTP + H(+) = UDP-N-acetyl-alpha-D-glucosamine + diphosphate. It functions in the pathway nucleotide-sugar biosynthesis; UDP-N-acetyl-alpha-D-glucosamine biosynthesis; N-acetyl-alpha-D-glucosamine 1-phosphate from alpha-D-glucosamine 6-phosphate (route II): step 2/2. The protein operates within nucleotide-sugar biosynthesis; UDP-N-acetyl-alpha-D-glucosamine biosynthesis; UDP-N-acetyl-alpha-D-glucosamine from N-acetyl-alpha-D-glucosamine 1-phosphate: step 1/1. It participates in bacterial outer membrane biogenesis; LPS lipid A biosynthesis. In terms of biological role, catalyzes the last two sequential reactions in the de novo biosynthetic pathway for UDP-N-acetylglucosamine (UDP-GlcNAc). The C-terminal domain catalyzes the transfer of acetyl group from acetyl coenzyme A to glucosamine-1-phosphate (GlcN-1-P) to produce N-acetylglucosamine-1-phosphate (GlcNAc-1-P), which is converted into UDP-GlcNAc by the transfer of uridine 5-monophosphate (from uridine 5-triphosphate), a reaction catalyzed by the N-terminal domain. The polypeptide is Bifunctional protein GlmU (Streptococcus pneumoniae serotype 2 (strain D39 / NCTC 7466)).